Reading from the N-terminus, the 321-residue chain is Basic peroxidase (321 aa).

Residues 1–30 (MSYHKSSGTILMVPLFMLLISVNYFMSCNA) form the signal peptide. At glutamine 31 the chain carries Pyrrolidone carboxylic acid. Intrachain disulfides connect cysteine 41/cysteine 117, cysteine 74/cysteine 79, cysteine 123/cysteine 317, and cysteine 202/cysteine 228. The Proton acceptor role is filled by histidine 72. Residues aspartate 73, valine 76, glycine 78, aspartate 80, and serine 82 each contribute to the Ca(2+) site. Proline 165 provides a ligand contact to substrate. Residue histidine 195 participates in heme b binding. A Ca(2+)-binding site is contributed by threonine 196. N-linked (GlcNAc...) asparagine glycans are attached at residues asparagine 211 and asparagine 221. 3 residues coordinate Ca(2+): aspartate 241, threonine 244, and aspartate 249.

This sequence belongs to the peroxidase family. Classical plant (class III) peroxidase subfamily. The cofactor is heme b. Requires Ca(2+) as cofactor. In terms of processing, N-glycosylated. In terms of tissue distribution, expressed in tracheary elements, roots, young and old hypocotyls, and stems in the partially glycosylated form and in roots and young hypocotyls in the fully glycosylated form. None of the isoforms is significantly expressed in leaves or cotyledons.

The protein localises to the secreted. It carries out the reaction 2 a phenolic donor + H2O2 = 2 a phenolic radical donor + 2 H2O. Removal of H(2)O(2), oxidation of toxic reductants, biosynthesis and degradation of lignin, suberization, auxin catabolism, response to environmental stresses such as wounding, pathogen attack and oxidative stress. These functions might be dependent on each isozyme/isoform in each plant tissue. Involved in the synthesis of highly polymerized lignins. The sequence is that of Basic peroxidase (POD1) from Zinnia elegans (Garden zinnia).